Reading from the N-terminus, the 172-residue chain is Dual-action ribosomal maturation protein DarP (172 aa).

Belongs to the DarP family.

The protein resides in the cytoplasm. Functionally, member of a network of 50S ribosomal subunit biogenesis factors which assembles along the 30S-50S interface, preventing incorrect 23S rRNA structures from forming. Promotes peptidyl transferase center (PTC) maturation. The protein is Dual-action ribosomal maturation protein DarP of Azotobacter vinelandii (strain DJ / ATCC BAA-1303).